The sequence spans 213 residues: Protein-L-isoaspartate O-methyltransferase (213 aa).

The active site involves serine 64.

This sequence belongs to the methyltransferase superfamily. L-isoaspartyl/D-aspartyl protein methyltransferase family.

Its subcellular location is the cytoplasm. It carries out the reaction [protein]-L-isoaspartate + S-adenosyl-L-methionine = [protein]-L-isoaspartate alpha-methyl ester + S-adenosyl-L-homocysteine. Its function is as follows. Catalyzes the methyl esterification of L-isoaspartyl residues in peptides and proteins that result from spontaneous decomposition of normal L-aspartyl and L-asparaginyl residues. It plays a role in the repair and/or degradation of damaged proteins. This is Protein-L-isoaspartate O-methyltransferase from Flavobacterium psychrophilum (strain ATCC 49511 / DSM 21280 / CIP 103535 / JIP02/86).